The chain runs to 357 residues: Probable 3'(2'),5'-bisphosphate nucleotidase 3 (357 aa).

Catalysis depends on D46, which acts as the Proton acceptor. Mg(2+)-binding residues include E71, D135, and I137. Residue T140 is the Proton acceptor of the active site. 4 residues coordinate adenosine 3',5'-bisphosphate: T140, S256, K259, and R273. AMP-binding residues include S256, K259, and R273.

Belongs to the inositol monophosphatase superfamily. The cofactor is Mg(2+).

The enzyme catalyses 3'-phosphoadenylyl sulfate + H2O = adenosine 5'-phosphosulfate + phosphate. The catalysed reaction is adenosine 3',5'-bisphosphate + H2O = AMP + phosphate. It carries out the reaction adenosine 2',5'-bisphosphate + H2O = AMP + phosphate. It catalyses the reaction 1D-myo-inositol 1,4-bisphosphate + H2O = 1D-myo-inositol 4-phosphate + phosphate. The enzyme catalyses 1D-myo-inositol 1,3,4-trisphosphate + H2O = 1D-myo-inositol 3,4-bisphosphate + phosphate. It participates in signal transduction; phosphatidylinositol signaling pathway. Its function is as follows. Phosphatase that converts adenosine 3'-phosphate 5'-phosphosulfate (PAPS) to adenosine 5'-phosphosulfate (APS) and 3'(2')-phosphoadenosine 5'-phosphate (PAP) to AMP. Is also able to hydrolyze inositol 1,4-bisphosphate and inositol 1,3,4-trisphosphate. This chain is Probable 3'(2'),5'-bisphosphate nucleotidase 3 (SAL3), found in Arabidopsis thaliana (Mouse-ear cress).